The sequence spans 100 residues: NADH-quinone oxidoreductase subunit K 1 (100 aa).

Helical transmembrane passes span 4-24, 29-49, and 60-80; these read LHSYLIVSAILFSIGTIGVLV, IVIFMCVEMMLNAVNLTFIAL, and IFVFFVMTVAAAEAAVGLALM.

Belongs to the complex I subunit 4L family. As to quaternary structure, NDH-1 is composed of 14 different subunits. Subunits NuoA, H, J, K, L, M, N constitute the membrane sector of the complex.

It is found in the cell inner membrane. It carries out the reaction a quinone + NADH + 5 H(+)(in) = a quinol + NAD(+) + 4 H(+)(out). In terms of biological role, NDH-1 shuttles electrons from NADH, via FMN and iron-sulfur (Fe-S) centers, to quinones in the respiratory chain. The immediate electron acceptor for the enzyme in this species is believed to be ubiquinone. Couples the redox reaction to proton translocation (for every two electrons transferred, four hydrogen ions are translocated across the cytoplasmic membrane), and thus conserves the redox energy in a proton gradient. This Geobacter sulfurreducens (strain ATCC 51573 / DSM 12127 / PCA) protein is NADH-quinone oxidoreductase subunit K 1.